The primary structure comprises 798 residues: Pentatricopeptide repeat-containing protein At5g67570, chloroplastic (798 aa).

Disordered stretches follow at residues 1 to 21 (MDASVVRFSQSPARVPPEFEP) and 50 to 73 (IQKHNRRTKRETESEAEVYTEAQK). PPR repeat units lie at residues 254-284 (SRFVYTKLLSVLGFARRPQEALQIFNQMLGD), 290-324 (DMAAYHCIAVTLGQAGLLKELLKVIERMRQKPTKL), 340-374 (DLVVYNAILNACVPTLQWKAVSWVFVELRKNGLRP), 375-409 (NGATYGLAMEVMLESGKFDRVHDFFRKMKSSGEAP), 410-444 (KAITYKVLVRALWREGKIEEAVEAVRDMEQKGVIG), 445-480 (TGSVYYELACCLCNNGRWCDAMLEVGRMKRLENCRP), 481-511 (LEITFTGLIAASLNGGHVDDCMAIFQYMKDK), 515-545 (NIGTANMMLKVYGRNDMFSEAKELFEEIVSR), 553-587 (NEYTYSFMLEASARSLQWEYFEHVYQTMVLSGYQM), and 588-622 (DQTKHASMLIEASRAGKWSLLEHAFDAVLEDGEIP).

The protein belongs to the PPR family. P subfamily. Interacts (via C-terminus) with SIGF (via N-terminus).

It is found in the plastid. The protein resides in the chloroplast. Functionally, involved in the regulation of early chloroplast development and chloroplast gene expression in a SIGF-dependent manner. This chain is Pentatricopeptide repeat-containing protein At5g67570, chloroplastic (DG1), found in Arabidopsis thaliana (Mouse-ear cress).